A 321-amino-acid polypeptide reads, in one-letter code: Glutaminase (321 aa).

Substrate-binding residues include S69, N120, E165, N172, Y196, Y248, and V266.

This sequence belongs to the glutaminase family. In terms of assembly, homotetramer.

It carries out the reaction L-glutamine + H2O = L-glutamate + NH4(+). This is Glutaminase from Bacteroides fragilis (strain ATCC 25285 / DSM 2151 / CCUG 4856 / JCM 11019 / LMG 10263 / NCTC 9343 / Onslow / VPI 2553 / EN-2).